Consider the following 299-residue polypeptide: ATP synthase gamma chain (299 aa).

This sequence belongs to the ATPase gamma chain family. As to quaternary structure, F-type ATPases have 2 components, CF(1) - the catalytic core - and CF(0) - the membrane proton channel. CF(1) has five subunits: alpha(3), beta(3), gamma(1), delta(1), epsilon(1). CF(0) has three main subunits: a, b and c.

The protein localises to the cell membrane. Produces ATP from ADP in the presence of a proton gradient across the membrane. The gamma chain is believed to be important in regulating ATPase activity and the flow of protons through the CF(0) complex. This is ATP synthase gamma chain from Clavibacter sepedonicus (Clavibacter michiganensis subsp. sepedonicus).